A 2008-amino-acid chain; its full sequence is Histone-lysine N-methyltransferase SETD1B (2008 aa).

The span at 1–20 shows a compositional bias: basic and acidic residues; the sequence is MSFREIKAGEKAKHPEDHGK. The segment at 1 to 42 is disordered; sequence MSFREIKAGEKAKHPEDHGKKQSSSWINGMENSTQASTSVEK. Residues 22-39 are compositionally biased toward polar residues; the sequence is QSSSWINGMENSTQASTS. The region spanning 111 to 199 is the RRM domain; the sequence is DEFYVGPVPP…NIIHVELDTK (89 aa). Disordered regions lie at residues 249–390, 402–652, 682–725, 950–1172, 1309–1328, 1345–1461, 1563–1600, 1674–1712, and 1814–1842; these read NLSS…SSYK, FPQS…APIT, PPGF…PPLP, RKEP…DKRE, TKLPSAVEEEDRLPRTPGRE, VPSS…FTPT, VGASILPPPPPHSVLPKRRPGRPRRSPPSVLSLDMYSG, KEEEAHAKPKRQWRRQKKSPEHLPVIPSPEYSPPQPQFR, and EEPPADTQGMSIPAQPHASTRAGSERRSE. The segment covering 251-264 has biased composition (low complexity); the sequence is SSVGSSVTPNSSTP. Polar residues-rich tracts occupy residues 265–293, 301–315, 360–381, 405–414, and 456–491; these read FSHDTAYSSCRQDTPNSFSQFTPQSQGTP, PFSQDSTYSSRQTTP, HQFSTFKSHQQEPVQFSHTPPL, SEEQPFAQTS, and DSNSAPEPSAPSFSQTPERSETPGTPTMESEMQHNS. Residues 492–521 show a composition bias toward basic and acidic residues; that stretch reads LDSRIEMLLKEQRTKLPFLNEHDSDNEVRM. The span at 524-537 shows a compositional bias: low complexity; the sequence is SPISSSSSQLSPIP. Polar residues-rich tracts occupy residues 540–560 and 582–604; these read GSNSQPGYRAQTPSSRPSSTG and ASLNQNSRGTSEASMTPIDQLNR. 2 stretches are compositionally biased toward basic and acidic residues: residues 606 to 617 and 626 to 636; these read SKVETLEVKEMV and EKMDESQHSSG. Acidic residues predominate over residues 637–646; the sequence is EDMEISDDEM. Residues 979 to 997 are compositionally biased toward basic and acidic residues; the sequence is ERDRDASDTTSDLSKKDAE. Residues 1011–1020 are compositionally biased toward acidic residues; that stretch reads LDSEGEEGDE. A compositionally biased stretch (basic and acidic residues) spans 1021–1031; it reads TSGKEEESSSE. 2 stretches are compositionally biased toward acidic residues: residues 1050 to 1094 and 1105 to 1149; these read EEEE…EEDA and ESSD…EDQD. Positions 1150–1172 are enriched in basic and acidic residues; that stretch reads REAMVAETEHEPASHELPDDKRE. Positions 1345-1356 are enriched in low complexity; the sequence is VPSSTVPLPSTP. Positions 1378–1392 are enriched in basic and acidic residues; sequence SIEEEIPRTPGRDIL. Residues 1418–1427 are compositionally biased toward low complexity; sequence LTGSSLTLSS. Composition is skewed to basic residues over residues 1577 to 1587 and 1681 to 1690; these read LPKRRPGRPRR and KPKRQWRRQK. Over residues 1699-1710 the composition is skewed to pro residues; that stretch reads IPSPEYSPPQPQ. The RxxxRR motif motif lies at 1840–1845; that stretch reads RSEQRR. The SET domain maps to 1869-1986; it reads KKLKFCKSHI…VNEEITYDYK (118 aa). Tyr1985 lines the S-adenosyl-L-methionine pocket. Residues 1992–2008 form the Post-SET domain; sequence VKIPCLCGSENCRGTLN.

It belongs to the class V-like SAM-binding methyltransferase superfamily. Component of the SET1B/COMPASS complex.

It localises to the nucleus speckle. Its subcellular location is the chromosome. The catalysed reaction is L-lysyl(4)-[histone H3] + 3 S-adenosyl-L-methionine = N(6),N(6),N(6)-trimethyl-L-lysyl(4)-[histone H3] + 3 S-adenosyl-L-homocysteine + 3 H(+). Histone methyltransferase that specifically methylates 'Lys-4' of histone H3, when part of the SET1 histone methyltransferase (HMT) complex, but not if the neighboring 'Lys-9' residue is already methylated. H3 'Lys-4' methylation represents a specific tag for epigenetic transcriptional activation. The protein is Histone-lysine N-methyltransferase SETD1B (SETD1B) of Gallus gallus (Chicken).